A 400-amino-acid chain; its full sequence is Queuine tRNA-ribosyltransferase catalytic subunit (400 aa).

The active-site Proton acceptor is aspartate 89. Substrate contacts are provided by residues 89–93 (DSGGF), aspartate 143, glutamine 185, and glycine 212. The RNA binding stretch occupies residues 243-249 (GVGFPVD). The active-site Nucleophile is aspartate 262. An RNA binding; important for wobble base 34 recognition region spans residues 267–271 (TRTAR). Residues cysteine 301, cysteine 303, cysteine 306, and histidine 331 each coordinate Zn(2+).

The protein belongs to the queuine tRNA-ribosyltransferase family. As to quaternary structure, heterodimer of a catalytic subunit and an accessory subunit. Zn(2+) is required as a cofactor.

Its subcellular location is the cytoplasm. The enzyme catalyses guanosine(34) in tRNA + queuine = queuosine(34) in tRNA + guanine. Catalytic subunit of the queuine tRNA-ribosyltransferase (TGT) that catalyzes the base-exchange of a guanine (G) residue with queuine (Q) at position 34 (anticodon wobble position) in tRNAs with GU(N) anticodons (tRNA-Asp, -Asn, -His and -Tyr), resulting in the hypermodified nucleoside queuosine (7-(((4,5-cis-dihydroxy-2-cyclopenten-1-yl)amino)methyl)-7-deazaguanosine). Catalysis occurs through a double-displacement mechanism. The nucleophile active site attacks the C1' of nucleotide 34 to detach the guanine base from the RNA, forming a covalent enzyme-RNA intermediate. The proton acceptor active site deprotonates the incoming queuine, allowing a nucleophilic attack on the C1' of the ribose to form the product. This is Queuine tRNA-ribosyltransferase catalytic subunit from Caenorhabditis elegans.